The sequence spans 477 residues: tRNA-2-methylthio-N(6)-dimethylallyladenosine synthase (477 aa).

In terms of domain architecture, MTTase N-terminal spans 13-130 (GGLFIKTYGC…LPAMIEEALA (118 aa)). [4Fe-4S] cluster-binding residues include C22, C59, C93, C178, C182, and C185. The Radical SAM core domain occupies 164–396 (ESNGVSAFVS…QAMLNEQTAA (233 aa)). The region spanning 399–462 (EGMVGTTQRV…ANSLKGKLVA (64 aa)) is the TRAM domain.

Belongs to the methylthiotransferase family. MiaB subfamily. As to quaternary structure, monomer. [4Fe-4S] cluster serves as cofactor.

The protein localises to the cytoplasm. It carries out the reaction N(6)-dimethylallyladenosine(37) in tRNA + (sulfur carrier)-SH + AH2 + 2 S-adenosyl-L-methionine = 2-methylsulfanyl-N(6)-dimethylallyladenosine(37) in tRNA + (sulfur carrier)-H + 5'-deoxyadenosine + L-methionine + A + S-adenosyl-L-homocysteine + 2 H(+). In terms of biological role, catalyzes the methylthiolation of N6-(dimethylallyl)adenosine (i(6)A), leading to the formation of 2-methylthio-N6-(dimethylallyl)adenosine (ms(2)i(6)A) at position 37 in tRNAs that read codons beginning with uridine. This is tRNA-2-methylthio-N(6)-dimethylallyladenosine synthase from Hydrogenovibrio crunogenus (strain DSM 25203 / XCL-2) (Thiomicrospira crunogena).